A 204-amino-acid chain; its full sequence is LexA repressor (204 aa).

A DNA-binding region (H-T-H motif) is located at residues 28–48 (RAEIAQELGFKSPNAAEEHLK). Catalysis depends on for autocatalytic cleavage activity residues serine 125 and lysine 162.

Belongs to the peptidase S24 family. In terms of assembly, homodimer.

It catalyses the reaction Hydrolysis of Ala-|-Gly bond in repressor LexA.. Functionally, represses a number of genes involved in the response to DNA damage (SOS response), including recA and lexA. In the presence of single-stranded DNA, RecA interacts with LexA causing an autocatalytic cleavage which disrupts the DNA-binding part of LexA, leading to derepression of the SOS regulon and eventually DNA repair. In Ectopseudomonas mendocina (strain ymp) (Pseudomonas mendocina), this protein is LexA repressor.